Here is a 274-residue protein sequence, read N- to C-terminus: uncharacterized protein (274 aa).

This is an uncharacterized protein from Rhodobacter capsulatus (Rhodopseudomonas capsulata).